We begin with the raw amino-acid sequence, 466 residues long: Cysteine--tRNA ligase (466 aa).

C30 is a binding site for Zn(2+). Positions 32–42 (PTVYNYIHIGN) match the 'HIGH' region motif. Residues C210, H235, and E239 each coordinate Zn(2+). A 'KMSKS' region motif is present at residues 267-271 (KMSKS). Residue K270 coordinates ATP. S271 bears the Phosphoserine mark.

The protein belongs to the class-I aminoacyl-tRNA synthetase family. In terms of assembly, monomer. Zn(2+) serves as cofactor.

It localises to the cytoplasm. The catalysed reaction is tRNA(Cys) + L-cysteine + ATP = L-cysteinyl-tRNA(Cys) + AMP + diphosphate. This Geobacillus sp. (strain WCH70) protein is Cysteine--tRNA ligase.